Here is a 317-residue protein sequence, read N- to C-terminus: 4-hydroxy-3-methylbut-2-enyl diphosphate reductase (317 aa).

Cys-12 serves as a coordination point for [4Fe-4S] cluster. Residues His-41 and His-74 each contribute to the (2E)-4-hydroxy-3-methylbut-2-enyl diphosphate site. Dimethylallyl diphosphate-binding residues include His-41 and His-74. Isopentenyl diphosphate-binding residues include His-41 and His-74. Residue Cys-96 participates in [4Fe-4S] cluster binding. His-124 contacts (2E)-4-hydroxy-3-methylbut-2-enyl diphosphate. Residue His-124 coordinates dimethylallyl diphosphate. His-124 is a binding site for isopentenyl diphosphate. The active-site Proton donor is the Glu-126. Thr-168 contacts (2E)-4-hydroxy-3-methylbut-2-enyl diphosphate. Residue Cys-198 coordinates [4Fe-4S] cluster. Positions 226, 227, 228, and 270 each coordinate (2E)-4-hydroxy-3-methylbut-2-enyl diphosphate. Dimethylallyl diphosphate-binding residues include Ser-226, Ser-227, Asn-228, and Ser-270. The isopentenyl diphosphate site is built by Ser-226, Ser-227, Asn-228, and Ser-270.

This sequence belongs to the IspH family. [4Fe-4S] cluster is required as a cofactor.

It catalyses the reaction isopentenyl diphosphate + 2 oxidized [2Fe-2S]-[ferredoxin] + H2O = (2E)-4-hydroxy-3-methylbut-2-enyl diphosphate + 2 reduced [2Fe-2S]-[ferredoxin] + 2 H(+). It carries out the reaction dimethylallyl diphosphate + 2 oxidized [2Fe-2S]-[ferredoxin] + H2O = (2E)-4-hydroxy-3-methylbut-2-enyl diphosphate + 2 reduced [2Fe-2S]-[ferredoxin] + 2 H(+). It functions in the pathway isoprenoid biosynthesis; dimethylallyl diphosphate biosynthesis; dimethylallyl diphosphate from (2E)-4-hydroxy-3-methylbutenyl diphosphate: step 1/1. It participates in isoprenoid biosynthesis; isopentenyl diphosphate biosynthesis via DXP pathway; isopentenyl diphosphate from 1-deoxy-D-xylulose 5-phosphate: step 6/6. Catalyzes the conversion of 1-hydroxy-2-methyl-2-(E)-butenyl 4-diphosphate (HMBPP) into a mixture of isopentenyl diphosphate (IPP) and dimethylallyl diphosphate (DMAPP). Acts in the terminal step of the DOXP/MEP pathway for isoprenoid precursor biosynthesis. The protein is 4-hydroxy-3-methylbut-2-enyl diphosphate reductase of Chromohalobacter salexigens (strain ATCC BAA-138 / DSM 3043 / CIP 106854 / NCIMB 13768 / 1H11).